The primary structure comprises 341 residues: Holliday junction branch migration complex subunit RuvB (341 aa).

The large ATPase domain (RuvB-L) stretch occupies residues 1–182 (MTERFVTPDF…FGVICRLEFY (182 aa)). ATP is bound by residues Leu-21, Arg-22, Gly-63, Lys-66, Thr-67, Thr-68, 129–131 (EDY), Arg-172, Tyr-182, and Arg-219. Position 67 (Thr-67) interacts with Mg(2+). The interval 183–253 (TDDELATIAG…IADMALSRLE (71 aa)) is small ATPAse domain (RuvB-S). The tract at residues 256–341 (NCGLDHMDRL…RGKTSGELFS (86 aa)) is head domain (RuvB-H). DNA is bound by residues Arg-311 and Arg-316.

This sequence belongs to the RuvB family. Homohexamer. Forms an RuvA(8)-RuvB(12)-Holliday junction (HJ) complex. HJ DNA is sandwiched between 2 RuvA tetramers; dsDNA enters through RuvA and exits via RuvB. An RuvB hexamer assembles on each DNA strand where it exits the tetramer. Each RuvB hexamer is contacted by two RuvA subunits (via domain III) on 2 adjacent RuvB subunits; this complex drives branch migration. In the full resolvosome a probable DNA-RuvA(4)-RuvB(12)-RuvC(2) complex forms which resolves the HJ.

The protein localises to the cytoplasm. The catalysed reaction is ATP + H2O = ADP + phosphate + H(+). In terms of biological role, the RuvA-RuvB-RuvC complex processes Holliday junction (HJ) DNA during genetic recombination and DNA repair, while the RuvA-RuvB complex plays an important role in the rescue of blocked DNA replication forks via replication fork reversal (RFR). RuvA specifically binds to HJ cruciform DNA, conferring on it an open structure. The RuvB hexamer acts as an ATP-dependent pump, pulling dsDNA into and through the RuvAB complex. RuvB forms 2 homohexamers on either side of HJ DNA bound by 1 or 2 RuvA tetramers; 4 subunits per hexamer contact DNA at a time. Coordinated motions by a converter formed by DNA-disengaged RuvB subunits stimulates ATP hydrolysis and nucleotide exchange. Immobilization of the converter enables RuvB to convert the ATP-contained energy into a lever motion, pulling 2 nucleotides of DNA out of the RuvA tetramer per ATP hydrolyzed, thus driving DNA branch migration. The RuvB motors rotate together with the DNA substrate, which together with the progressing nucleotide cycle form the mechanistic basis for DNA recombination by continuous HJ branch migration. Branch migration allows RuvC to scan DNA until it finds its consensus sequence, where it cleaves and resolves cruciform DNA. This is Holliday junction branch migration complex subunit RuvB from Syntrophotalea carbinolica (strain DSM 2380 / NBRC 103641 / GraBd1) (Pelobacter carbinolicus).